The chain runs to 341 residues: uncharacterized protein (341 aa).

This is an uncharacterized protein from Mycobacterium bovis (strain ATCC BAA-935 / AF2122/97).